We begin with the raw amino-acid sequence, 167 residues long: Low molecular mass early light-inducible protein HV60, chloroplastic (167 aa).

The transit peptide at 1–33 directs the protein to the chloroplast; it reads MATMMAMSSFAGAAVLPRGSARSLPALGRRTLV. Transmembrane regions (helical) follow at residues 101–121 and 145–165; these read GQAWFAYTVAMLSMASLVPLL and FAMIGLVALAATEIITGTPFI.

This sequence belongs to the ELIP/psbS family.

It is found in the plastid. Its subcellular location is the chloroplast membrane. Its function is as follows. Probably involved in the integration of pigments into the mature pigment-protein complexes. The polypeptide is Low molecular mass early light-inducible protein HV60, chloroplastic (Hordeum vulgare (Barley)).